Consider the following 156-residue polypeptide: Lipoprotein signal peptidase (156 aa).

The next 3 helical transmembrane spans lie at F5 to V25, Y64 to L84, and I89 to G109. Catalysis depends on residues D113 and D130. The helical transmembrane segment at N122–I142 threads the bilayer.

The protein belongs to the peptidase A8 family.

It is found in the cell inner membrane. The enzyme catalyses Release of signal peptides from bacterial membrane prolipoproteins. Hydrolyzes -Xaa-Yaa-Zaa-|-(S,diacylglyceryl)Cys-, in which Xaa is hydrophobic (preferably Leu), and Yaa (Ala or Ser) and Zaa (Gly or Ala) have small, neutral side chains.. Its pathway is protein modification; lipoprotein biosynthesis (signal peptide cleavage). In terms of biological role, this protein specifically catalyzes the removal of signal peptides from prolipoproteins. This Campylobacter jejuni subsp. jejuni serotype O:23/36 (strain 81-176) protein is Lipoprotein signal peptidase.